We begin with the raw amino-acid sequence, 227 residues long: Cytochrome c oxidase subunit 2 (227 aa).

Topologically, residues 1-14 (MAYPVQLGFQDAAS) are mitochondrial intermembrane. The helical transmembrane segment at 15–45 (PIMEELLYFHDHTLMIMFLISSLVLYIISLM) threads the bilayer. Residues 46–59 (LTTELIHTSTMDAQ) are Mitochondrial matrix-facing. The helical transmembrane segment at 60–87 (EVETVWTILPAVILILIALPSLRILYMM) threads the bilayer. The Mitochondrial intermembrane portion of the chain corresponds to 88-227 (DEISTPSLTL…HFEEWLLSML (140 aa)). Cu cation is bound by residues His-161, Cys-196, Glu-198, Cys-200, His-204, and Met-207. Position 198 (Glu-198) interacts with Mg(2+).

Belongs to the cytochrome c oxidase subunit 2 family. Component of the cytochrome c oxidase (complex IV, CIV), a multisubunit enzyme composed of 14 subunits. The complex is composed of a catalytic core of 3 subunits MT-CO1, MT-CO2 and MT-CO3, encoded in the mitochondrial DNA, and 11 supernumerary subunits COX4I, COX5A, COX5B, COX6A, COX6B, COX6C, COX7A, COX7B, COX7C, COX8 and NDUFA4, which are encoded in the nuclear genome. The complex exists as a monomer or a dimer and forms supercomplexes (SCs) in the inner mitochondrial membrane with NADH-ubiquinone oxidoreductase (complex I, CI) and ubiquinol-cytochrome c oxidoreductase (cytochrome b-c1 complex, complex III, CIII), resulting in different assemblies (supercomplex SCI(1)III(2)IV(1) and megacomplex MCI(2)III(2)IV(2)). Found in a complex with TMEM177, COA6, COX18, COX20, SCO1 and SCO2. Interacts with TMEM177 in a COX20-dependent manner. Interacts with COX20. Interacts with COX16. Cu cation serves as cofactor.

The protein localises to the mitochondrion inner membrane. The enzyme catalyses 4 Fe(II)-[cytochrome c] + O2 + 8 H(+)(in) = 4 Fe(III)-[cytochrome c] + 2 H2O + 4 H(+)(out). In terms of biological role, component of the cytochrome c oxidase, the last enzyme in the mitochondrial electron transport chain which drives oxidative phosphorylation. The respiratory chain contains 3 multisubunit complexes succinate dehydrogenase (complex II, CII), ubiquinol-cytochrome c oxidoreductase (cytochrome b-c1 complex, complex III, CIII) and cytochrome c oxidase (complex IV, CIV), that cooperate to transfer electrons derived from NADH and succinate to molecular oxygen, creating an electrochemical gradient over the inner membrane that drives transmembrane transport and the ATP synthase. Cytochrome c oxidase is the component of the respiratory chain that catalyzes the reduction of oxygen to water. Electrons originating from reduced cytochrome c in the intermembrane space (IMS) are transferred via the dinuclear copper A center (CU(A)) of subunit 2 and heme A of subunit 1 to the active site in subunit 1, a binuclear center (BNC) formed by heme A3 and copper B (CU(B)). The BNC reduces molecular oxygen to 2 water molecules using 4 electrons from cytochrome c in the IMS and 4 protons from the mitochondrial matrix. This chain is Cytochrome c oxidase subunit 2 (MT-CO2), found in Eulemur macaco (Black lemur).